Here is a 919-residue protein sequence, read N- to C-terminus: 2-oxoadipate dehydrogenase complex component E1 (919 aa).

2 positions are modified to N6-succinyllysine: K183 and K188. The disordered stretch occupies residues 299–320 (GKTRGRQQSRQDGDYSPDNSAQ). An N6-succinyllysine mark is found at K800 and K818.

This sequence belongs to the alpha-ketoglutarate dehydrogenase family. As to quaternary structure, the 2-oxoadipate dehydrogenase complex is composed of OADH (2-oxoadipate dehydrogenase; E1a), DLST (dihydrolipoamide succinyltransferase; E2) and DLD (dihydrolipoamide dehydrogenase; E3). E1a functional unit is a dimer. Interacts with DLST. Thiamine diphosphate serves as cofactor.

It localises to the mitochondrion. The catalysed reaction is N(6)-[(R)-lipoyl]-L-lysyl-[protein] + 2-oxoadipate + H(+) = N(6)-[(R)-S(8)-glutaryldihydrolipoyl]-L-lysyl-[protein] + CO2. It functions in the pathway amino-acid degradation. In terms of biological role, 2-oxoadipate dehydrogenase (E1a) component of the 2-oxoadipate dehydrogenase complex (OADHC). Participates in the first step, rate limiting for the overall conversion of 2-oxoadipate (alpha-ketoadipate) to glutaryl-CoA and CO(2) catalyzed by the whole OADHC. Catalyzes the irreversible decarboxylation of 2-oxoadipate via the thiamine diphosphate (ThDP) cofactor and subsequent transfer of the decarboxylated acyl intermediate on an oxidized dihydrolipoyl group that is covalently amidated to the E2 enzyme (dihydrolipoyllysine-residue succinyltransferase or DLST). Can catalyze the decarboxylation of 2-oxoglutarate in vitro, but at a much lower rate than 2-oxoadipate. Responsible for the last step of L-lysine, L-hydroxylysine and L-tryptophan catabolism with the common product being 2-oxoadipate. The polypeptide is 2-oxoadipate dehydrogenase complex component E1 (DHTKD1) (Homo sapiens (Human)).